Reading from the N-terminus, the 126-residue chain is Fatty acid-binding protein 10-A, liver basic (126 aa).

The cholate site is built by K57, K77, H99, and Q101.

This sequence belongs to the calycin superfamily. Fatty-acid binding protein (FABP) family. In terms of tissue distribution, expressed in the developing embryonic liver from 48 hpf. Also expressed in the liver of 5-day-old larvae. In adults, primarily expressed in the liver, with weak expression in the testis and intestine.

It is found in the cytoplasm. In terms of biological role, binds hydrophobic ligands, such as cholate, in the cytoplasm. May be involved in intracellular lipid transport. Binds one cholate per subunit. The polypeptide is Fatty acid-binding protein 10-A, liver basic (fabp10a) (Danio rerio (Zebrafish)).